We begin with the raw amino-acid sequence, 235 residues long: Octanoyltransferase (235 aa).

The 184-residue stretch at 37–220 (AGGPDTLLLL…AVNDALDGWL (184 aa)) folds into the BPL/LPL catalytic domain. Substrate contacts are provided by residues 78–85 (RGGKITWH), 150–152 (AIG), and 163–165 (GFA). Residue Cys-181 is the Acyl-thioester intermediate of the active site.

It belongs to the LipB family.

Its subcellular location is the cytoplasm. It carries out the reaction octanoyl-[ACP] + L-lysyl-[protein] = N(6)-octanoyl-L-lysyl-[protein] + holo-[ACP] + H(+). The protein operates within protein modification; protein lipoylation via endogenous pathway; protein N(6)-(lipoyl)lysine from octanoyl-[acyl-carrier-protein]: step 1/2. Catalyzes the transfer of endogenously produced octanoic acid from octanoyl-acyl-carrier-protein onto the lipoyl domains of lipoate-dependent enzymes. Lipoyl-ACP can also act as a substrate although octanoyl-ACP is likely to be the physiological substrate. The sequence is that of Octanoyltransferase from Mycobacterium leprae (strain Br4923).